A 571-amino-acid chain; its full sequence is Proline--tRNA ligase (571 aa).

Belongs to the class-II aminoacyl-tRNA synthetase family. ProS type 1 subfamily. In terms of assembly, homodimer.

It is found in the cytoplasm. The catalysed reaction is tRNA(Pro) + L-proline + ATP = L-prolyl-tRNA(Pro) + AMP + diphosphate. In terms of biological role, catalyzes the attachment of proline to tRNA(Pro) in a two-step reaction: proline is first activated by ATP to form Pro-AMP and then transferred to the acceptor end of tRNA(Pro). As ProRS can inadvertently accommodate and process non-cognate amino acids such as alanine and cysteine, to avoid such errors it has two additional distinct editing activities against alanine. One activity is designated as 'pretransfer' editing and involves the tRNA(Pro)-independent hydrolysis of activated Ala-AMP. The other activity is designated 'posttransfer' editing and involves deacylation of mischarged Ala-tRNA(Pro). The misacylated Cys-tRNA(Pro) is not edited by ProRS. The polypeptide is Proline--tRNA ligase (Aliivibrio salmonicida (strain LFI1238) (Vibrio salmonicida (strain LFI1238))).